The primary structure comprises 502 residues: Rab11 family-interacting protein 4B (502 aa).

Disordered regions lie at residues 1 to 49 (MSIQ…EEGI) and 71 to 98 (SALSSASLNEEQFEDYGEGEDGDCTTSS). A compositionally biased stretch (basic and acidic residues) spans 15 to 29 (EEGRGVERDSDRDSA). The span at 71-80 (SALSSASLNE) shows a compositional bias: polar residues. The segment covering 81–93 (EQFEDYGEGEDGD) has biased composition (acidic residues). Residues 228 to 482 (DVKTKLKQEN…EEINLRLRQY (255 aa)) adopt a coiled-coil conformation. An FIP-RBD domain is found at 439 to 501 (EAKNLFATQT…DHNPSILEIK (63 aa)).

As to quaternary structure, homodimer. Forms a complex with Rab11 (rab11a or rab11b) and arf6.

It localises to the recycling endosome membrane. The protein resides in the cleavage furrow. Its subcellular location is the midbody. The protein localises to the cytoplasmic vesicle. Functionally, acts as a regulator of endocytic traffic by participating in membrane delivery. Required for the abscission step in cytokinesis, possibly by acting as an 'address tag' delivering recycling endosome membranes to the cleavage furrow during late cytokinesis. The protein is Rab11 family-interacting protein 4B (rab11fip4b) of Danio rerio (Zebrafish).